The following is a 284-amino-acid chain: Bifunctional protein FolD (284 aa).

NADP(+)-binding positions include 165–167, S190, and V231; that span reads GRS.

It belongs to the tetrahydrofolate dehydrogenase/cyclohydrolase family. Homodimer.

It carries out the reaction (6R)-5,10-methylene-5,6,7,8-tetrahydrofolate + NADP(+) = (6R)-5,10-methenyltetrahydrofolate + NADPH. The enzyme catalyses (6R)-5,10-methenyltetrahydrofolate + H2O = (6R)-10-formyltetrahydrofolate + H(+). It participates in one-carbon metabolism; tetrahydrofolate interconversion. Functionally, catalyzes the oxidation of 5,10-methylenetetrahydrofolate to 5,10-methenyltetrahydrofolate and then the hydrolysis of 5,10-methenyltetrahydrofolate to 10-formyltetrahydrofolate. In Bacillus licheniformis (strain ATCC 14580 / DSM 13 / JCM 2505 / CCUG 7422 / NBRC 12200 / NCIMB 9375 / NCTC 10341 / NRRL NRS-1264 / Gibson 46), this protein is Bifunctional protein FolD.